A 570-amino-acid chain; its full sequence is Phosphoglucomutase 1 (570 aa).

The residue at position 2 (Ser-2) is an N-acetylserine. Positions 24 and 120 each coordinate alpha-D-glucose 1,6-bisphosphate. The active-site Phosphoserine intermediate is the Ser-120. Residues Ser-120, Asp-291, Asp-293, and Asp-295 each coordinate Mg(2+). The residue at position 120 (Ser-120) is a Phosphoserine. 6 residues coordinate alpha-D-glucose 1,6-bisphosphate: Asp-295, Arg-296, Thr-360, Glu-379, Ser-381, and Lys-392.

The protein belongs to the phosphohexose mutase family. Monomer. Requires Mg(2+) as cofactor.

Its subcellular location is the cytoplasm. The catalysed reaction is alpha-D-glucose 1-phosphate = alpha-D-glucose 6-phosphate. It carries out the reaction O-phospho-L-seryl-[protein] + alpha-D-glucose 1-phosphate = alpha-D-glucose 1,6-bisphosphate + L-seryl-[protein]. The enzyme catalyses alpha-D-glucose 1,6-bisphosphate + L-seryl-[protein] = O-phospho-L-seryl-[protein] + alpha-D-glucose 6-phosphate. Functionally, minor phosphoglucomutase isozyme that catalyzes the reversible interconversion of alpha-D-glucose 1-phosphate and alpha-D-glucose 6-phosphate. The mechanism proceeds via the intermediate compound alpha-D-glucose 1,6-bisphosphate. Constitutes about 10-20% of the phosphoglucomutase activity in the cell. Key enzyme in hexose metabolism. The forward reaction is an essential step in the energy metabolism of galactose since the product of the galactose pathway enzymes in yeast is glucose 1-phosphate. The reverse reaction is an essential step for biosynthesis when carbon sources other than galactose are the energy source because glucose 1-phosphate is the starting point for the synthesis of UDP-glucose, which acts as a precursor for the synthesis of oligosaccharides and trehalose. This Saccharomyces cerevisiae (strain ATCC 204508 / S288c) (Baker's yeast) protein is Phosphoglucomutase 1.